The following is a 769-amino-acid chain: Serine protease HtrA-like (769 aa).

The segment covering 1 to 20 (MDIGKKHVIPKSQYRRKRRE) has biased composition (basic residues). Positions 1 to 390 (MDIGKKHVIP…ATSKLNKGRA (390 aa)) are disordered. 2 stretches are compositionally biased toward basic and acidic residues: residues 21-64 (FFHN…ERFK) and 71-108 (LEQR…DVSK). Over residues 126–137 (YEQNSEATLSTK) the composition is skewed to polar residues. Residues 138-186 (STDKVESTDMRKLSSDKNKVGHEEQHVLSKPSEHDKETRIDFESSRTDS) show a composition bias toward basic and acidic residues. Over residues 247–262 (QQSQNEQTKTYTYGDS) the composition is skewed to polar residues. Basic and acidic residues-rich tracts occupy residues 264–296 (QNDK…HIVD) and 310–330 (KTDD…HKQN). Over residues 331–347 (ADSSETVGYQSQSSASH) the composition is skewed to polar residues. Basic and acidic residues predominate over residues 348–364 (RITEKRNNAINDHDKLN). Residues 366 to 390 (QKPNAKTSANNNQKKATSKLNKGRA) show a composition bias toward polar residues. A helical transmembrane segment spans residues 410–430 (LVILMGIIILIVILNAIFNNV). Residues histidine 504, aspartate 534, and serine 619 each act as charge relay system in the active site. Positions 680-733 (IASLNSFERQAVKLPGKVKNGVVVDQVDNNGLADQSGLKKGDVITELDGKLLED) constitute a PDZ domain.

It belongs to the peptidase S1C family.

Its subcellular location is the cell membrane. This chain is Serine protease HtrA-like, found in Staphylococcus aureus (strain MSSA476).